A 249-amino-acid polypeptide reads, in one-letter code: NAD kinase (249 aa).

Aspartate 45 serves as the catalytic Proton acceptor. NAD(+) contacts are provided by residues 45-46, arginine 50, 110-111, aspartate 138, and 149-154; these read DG, NE, and SGWGMS.

This sequence belongs to the NAD kinase family. A divalent metal cation is required as a cofactor.

The protein localises to the cytoplasm. It catalyses the reaction NAD(+) + ATP = ADP + NADP(+) + H(+). Its function is as follows. Involved in the regulation of the intracellular balance of NAD and NADP, and is a key enzyme in the biosynthesis of NADP. Catalyzes specifically the phosphorylation on 2'-hydroxyl of the adenosine moiety of NAD to yield NADP. This Saccharolobus islandicus (strain Y.N.15.51 / Yellowstone #2) (Sulfolobus islandicus) protein is NAD kinase.